An 880-amino-acid chain; its full sequence is Valine--tRNA ligase (880 aa).

Positions 48 to 58 (PNVTGKLHLGH) match the 'HIGH' region motif. Positions 524–528 (KMSKS) match the 'KMSKS' region motif. Lys527 lines the ATP pocket. Residues 808 to 879 (LAGLINIEEE…VKERIAQLRS (72 aa)) are a coiled coil.

This sequence belongs to the class-I aminoacyl-tRNA synthetase family. ValS type 1 subfamily. In terms of assembly, monomer.

The protein resides in the cytoplasm. It carries out the reaction tRNA(Val) + L-valine + ATP = L-valyl-tRNA(Val) + AMP + diphosphate. Functionally, catalyzes the attachment of valine to tRNA(Val). As ValRS can inadvertently accommodate and process structurally similar amino acids such as threonine, to avoid such errors, it has a 'posttransfer' editing activity that hydrolyzes mischarged Thr-tRNA(Val) in a tRNA-dependent manner. This is Valine--tRNA ligase from Enterococcus faecalis (strain ATCC 700802 / V583).